The chain runs to 177 residues: 3-hydroxydecanoyl-[acyl-carrier-protein] dehydratase (177 aa).

His-76 is a catalytic residue.

The protein belongs to the thioester dehydratase family. FabA subfamily. As to quaternary structure, homodimer.

The protein resides in the cytoplasm. The catalysed reaction is a (3R)-hydroxyacyl-[ACP] = a (2E)-enoyl-[ACP] + H2O. The enzyme catalyses (3R)-hydroxydecanoyl-[ACP] = (2E)-decenoyl-[ACP] + H2O. It catalyses the reaction (2E)-decenoyl-[ACP] = (3Z)-decenoyl-[ACP]. The protein operates within lipid metabolism; fatty acid biosynthesis. Functionally, necessary for the introduction of cis unsaturation into fatty acids. Catalyzes the dehydration of (3R)-3-hydroxydecanoyl-ACP to E-(2)-decenoyl-ACP and then its isomerization to Z-(3)-decenoyl-ACP. Can catalyze the dehydratase reaction for beta-hydroxyacyl-ACPs with saturated chain lengths up to 16:0, being most active on intermediate chain length. The polypeptide is 3-hydroxydecanoyl-[acyl-carrier-protein] dehydratase (Actinobacillus succinogenes (strain ATCC 55618 / DSM 22257 / CCUG 43843 / 130Z)).